The following is an 89-amino-acid chain: Small ribosomal subunit protein uS15 (89 aa).

This sequence belongs to the universal ribosomal protein uS15 family. In terms of assembly, part of the 30S ribosomal subunit. Forms a bridge to the 50S subunit in the 70S ribosome, contacting the 23S rRNA.

One of the primary rRNA binding proteins, it binds directly to 16S rRNA where it helps nucleate assembly of the platform of the 30S subunit by binding and bridging several RNA helices of the 16S rRNA. In terms of biological role, forms an intersubunit bridge (bridge B4) with the 23S rRNA of the 50S subunit in the ribosome. This Acidithiobacillus ferrooxidans (strain ATCC 23270 / DSM 14882 / CIP 104768 / NCIMB 8455) (Ferrobacillus ferrooxidans (strain ATCC 23270)) protein is Small ribosomal subunit protein uS15.